The following is a 77-amino-acid chain: uncharacterized protein (77 aa).

This is an uncharacterized protein from Dictyostelium discoideum (Social amoeba).